Here is a 293-residue protein sequence, read N- to C-terminus: Elongation factor Ts (293 aa).

Residues 80–83 (TDFV) form an involved in Mg(2+) ion dislocation from EF-Tu region.

The protein belongs to the EF-Ts family.

It localises to the cytoplasm. Functionally, associates with the EF-Tu.GDP complex and induces the exchange of GDP to GTP. It remains bound to the aminoacyl-tRNA.EF-Tu.GTP complex up to the GTP hydrolysis stage on the ribosome. The polypeptide is Elongation factor Ts (Staphylococcus aureus (strain Mu3 / ATCC 700698)).